The chain runs to 849 residues: Dopamine receptor 2 (849 aa).

Residues Met1–Tyr39 lie on the Extracellular side of the membrane. An N-linked (GlcNAc...) asparagine glycan is attached at Asn8. A helical membrane pass occupies residues Ala40–Ile60. At Ser61–Ser70 the chain is on the cytoplasmic side. A helical transmembrane segment spans residues Ala71–Met91. Over Pro92–Asp112 the chain is Extracellular. Cys111 and Cys190 are oxidised to a cystine. Residues Ile113–Ser133 form a helical membrane-spanning segment. Residues Phe134–Arg155 are Cytoplasmic-facing. A helical transmembrane segment spans residues Val156–Phe176. Residues Gly177–Met203 lie on the Extracellular side of the membrane. The tract at residues Pro183–Val849 is required for the interaction with gpa-14. Residues Ile204–Leu224 traverse the membrane as a helical segment. Topologically, residues Lys225 to Thr759 are cytoplasmic. The tract at residues Arg450–Asn515 is disordered. Positions Asp457 to Gly470 are enriched in low complexity. A compositionally biased stretch (basic residues) spans Gly477–Lys498. The segment covering Arg501–Asn515 has biased composition (polar residues). Residues Leu760 to Leu780 traverse the membrane as a helical segment. Residues Asn781–Leu798 are Extracellular-facing. A helical membrane pass occupies residues Phe799–Ile819. Over Phe820–Val849 the chain is Cytoplasmic.

Belongs to the G-protein coupled receptor 1 family. As to quaternary structure, interacts (via C-terminus) with the G-alpha protein gpa-14; the interaction is direct. Expressed in all dopaminergic neurons. Expressed in neurons around the nerve ring and the posterior side of the body including PDE neurons. In hermaphrodites, expressed in the head and tail ganglia including in the RIA interneuron pair, and in a subset of sublateral interneurons and the PDA neuron in the tail. Expressed in cholinergic SIA neurons. Also expressed in the male tail. In males, expressed in the dorsal spicule protractor, ventral spicule protractor, dorsal spicule retractor and ventral spicule retractor muscles and the sensory post-cloacal sensilla B (PCB) neuron. In males, expressed in the sensory hook neurons HOA.

The protein localises to the cell membrane. In terms of biological role, G-protein coupled receptor which binds to the neurotransmitter dopamine with high affinity leading to the activation of an associated G-protein and downstream signaling pathways. Couples to G-proteins to inhibit adenylate cyclase (AC) activity and cAMP production. Inhibits synaptic vesicle fusion to negatively regulate the release of dopamine at dopaminergic neuron synapses. Antagonizes octopamine signaling in response to food by promoting the dopamine-mediated suppression of crh-1/CREB1 transcription factor activation in cholinergic SIA neurons. This is most likely in association with the G(o)-alpha G-protein subunit goa-1. In association with the G-alpha protein gpa-14, modulates two types of learning behavior: touch habituation and chemosensory associative conditioning. May act partly via tsp-17 to negatively regulate dopamine reuptake transporter dat-1 activity. Plays a role in behavioral plasticity and regulates the decision-making process when conflicting alternatives are present. Promotes male mating behavior by antagonizing acetylcholine signaling to control the protrusions of copulatory spicules from the tail of males during hermaphrodite vulval location. Modulates unc-7 activity at gap junctions to promote inhibitory neuronal signaling transduction between chemosensory and mechanosensory neurons, and thus ensures spicule insertion attempts are confined to the hermaphrodite vulva during copulation. Its function is as follows. G-protein coupled receptor which binds to the neurotransmitter dopamine with high affinity leading to the activation of an associated G-protein and downstream signaling pathways. Couples to G-proteins to inhibit adenylate cyclase (AC) activity and cAMP production. This Caenorhabditis elegans protein is Dopamine receptor 2.